Reading from the N-terminus, the 345-residue chain is Fructose-bisphosphate aldolase (345 aa).

Residue serine 53 coordinates D-glyceraldehyde 3-phosphate. Aspartate 95 acts as the Proton donor in catalysis. Histidine 96, aspartate 131, glutamate 161, and histidine 212 together coordinate Zn(2+). Glycine 213 lines the dihydroxyacetone phosphate pocket. Histidine 252 provides a ligand contact to Zn(2+). Dihydroxyacetone phosphate contacts are provided by residues 253-255 and 274-277; these read GGS and NVDT.

This sequence belongs to the class II fructose-bisphosphate aldolase family. Requires Zn(2+) as cofactor.

It catalyses the reaction beta-D-fructose 1,6-bisphosphate = D-glyceraldehyde 3-phosphate + dihydroxyacetone phosphate. Its pathway is carbohydrate degradation; glycolysis; D-glyceraldehyde 3-phosphate and glycerone phosphate from D-glucose: step 4/4. Its function is as follows. Catalyzes the aldol condensation of dihydroxyacetone phosphate (DHAP or glycerone-phosphate) with glyceraldehyde 3-phosphate (G3P) to form fructose 1,6-bisphosphate (FBP) in gluconeogenesis and the reverse reaction in glycolysis. The chain is Fructose-bisphosphate aldolase (fba) from Mycobacterium leprae (strain TN).